A 195-amino-acid polypeptide reads, in one-letter code: Holliday junction branch migration complex subunit RuvA (195 aa).

A domain I region spans residues 1-62 (MIEFVKGPVA…EDQQTLYGFR (62 aa)). The domain II stretch occupies residues 63–141 (SRRERELFNK…ELAPDYVPNE (79 aa)). Residues 141 to 145 (EGLFA) are flexible linker. Residues 146–195 (QGASELDEACEALVALGYSEREIAKVRKALSGEILTTDAYIKRALQLLLK) form a domain III region.

This sequence belongs to the RuvA family. In terms of assembly, homotetramer. Forms an RuvA(8)-RuvB(12)-Holliday junction (HJ) complex. HJ DNA is sandwiched between 2 RuvA tetramers; dsDNA enters through RuvA and exits via RuvB. An RuvB hexamer assembles on each DNA strand where it exits the tetramer. Each RuvB hexamer is contacted by two RuvA subunits (via domain III) on 2 adjacent RuvB subunits; this complex drives branch migration. In the full resolvosome a probable DNA-RuvA(4)-RuvB(12)-RuvC(2) complex forms which resolves the HJ.

It is found in the cytoplasm. In terms of biological role, the RuvA-RuvB-RuvC complex processes Holliday junction (HJ) DNA during genetic recombination and DNA repair, while the RuvA-RuvB complex plays an important role in the rescue of blocked DNA replication forks via replication fork reversal (RFR). RuvA specifically binds to HJ cruciform DNA, conferring on it an open structure. The RuvB hexamer acts as an ATP-dependent pump, pulling dsDNA into and through the RuvAB complex. HJ branch migration allows RuvC to scan DNA until it finds its consensus sequence, where it cleaves and resolves the cruciform DNA. This Exiguobacterium sp. (strain ATCC BAA-1283 / AT1b) protein is Holliday junction branch migration complex subunit RuvA.